The primary structure comprises 435 residues: MIDQNLLRTNLDDVANALKLKRNFILDVNQVKALEEQRKTLQVTTETLQAERNARSKNIGAAKARGENISQLLAEVDTMGNQLEIAKTELDKVQSEIRELLLTIPNLPAEEVPLGKDDSQNKEILRWGTPRQFDFEIKDHVTLGENLKGIDFPTGVKLTASRFVVMKDKIARLHRALAQFMLDLHSEQHGYMEVNVPLLVNHDTLYGTGQLPKFGEDLFHTQPLTGQDPNEVQRPYGLIPTAEVPLTNLVRDEIVDEDSLPIKLVAHTPCFRAEAGSYGRDTRGLIRMHQFEKVELVQIVAPEKSMEALEELTGQAEKILQLLHLPYRKVLLCTGDMGFGSAKTYDLEVWLPAQNTYREISSCSNMWDFQARRMSARCKAKGDKKTRLVHTLNGSGLAVGRTLVAVLENYQNADGSITIPEVLRPYMAGQEAITG.

An L-serine-binding site is contributed by 241 to 243 (TAE). 272-274 (RAE) contributes to the ATP binding site. Glu295 serves as a coordination point for L-serine. Residue 359-362 (EISS) participates in ATP binding. Ser395 lines the L-serine pocket.

The protein belongs to the class-II aminoacyl-tRNA synthetase family. Type-1 seryl-tRNA synthetase subfamily. As to quaternary structure, homodimer. The tRNA molecule binds across the dimer.

The protein localises to the cytoplasm. The catalysed reaction is tRNA(Ser) + L-serine + ATP = L-seryl-tRNA(Ser) + AMP + diphosphate + H(+). The enzyme catalyses tRNA(Sec) + L-serine + ATP = L-seryl-tRNA(Sec) + AMP + diphosphate + H(+). It participates in aminoacyl-tRNA biosynthesis; selenocysteinyl-tRNA(Sec) biosynthesis; L-seryl-tRNA(Sec) from L-serine and tRNA(Sec): step 1/1. Catalyzes the attachment of serine to tRNA(Ser). Is also able to aminoacylate tRNA(Sec) with serine, to form the misacylated tRNA L-seryl-tRNA(Sec), which will be further converted into selenocysteinyl-tRNA(Sec). In Haemophilus ducreyi (strain 35000HP / ATCC 700724), this protein is Serine--tRNA ligase.